Here is a 942-residue protein sequence, read N- to C-terminus: DNA mismatch repair protein MutS (942 aa).

613–620 (GPNMAGKS) is a binding site for ATP.

The protein belongs to the DNA mismatch repair MutS family.

Its function is as follows. This protein is involved in the repair of mismatches in DNA. It is possible that it carries out the mismatch recognition step. This protein has a weak ATPase activity. The chain is DNA mismatch repair protein MutS from Clostridium botulinum (strain Eklund 17B / Type B).